The chain runs to 249 residues: LexA repressor (249 aa).

The interval 1 to 26 is disordered; sequence MAAQATGGRATQRSQQSPAKPKGLTV. A compositionally biased stretch (polar residues) spans 9–18; it reads RATQRSQQSP. The H-T-H motif DNA-binding region spans 48-68; it reads MREIGDTVGLASLSSVTHQLS. Catalysis depends on for autocatalytic cleavage activity residues Ser173 and Lys210.

Belongs to the peptidase S24 family. Homodimer.

It carries out the reaction Hydrolysis of Ala-|-Gly bond in repressor LexA.. In terms of biological role, represses a number of genes involved in the response to DNA damage (SOS response), including recA and lexA. In the presence of single-stranded DNA, RecA interacts with LexA causing an autocatalytic cleavage which disrupts the DNA-binding part of LexA, leading to derepression of the SOS regulon and eventually DNA repair. This is LexA repressor from Arthrobacter sp. (strain FB24).